The following is a 314-amino-acid chain: THAP domain-containing protein 11 (314 aa).

The THAP-type zinc finger occupies 1-80; it reads MPGFTCCVPG…TYTVRVPTIF (80 aa). A disordered region spans residues 85-111; that stretch reads VNERKVARRPAGAAAARRRQQQQQQQQ. Low complexity predominate over residues 93-111; it reads RPAGAAAARRRQQQQQQQQ. The HCFC1-binding motif (HBM) motif lies at 243-246; it reads DHSY. Residues 255–305 adopt a coiled-coil conformation; it reads EELLRKLNEQRDILALMEVKMKEMKGSIRHLRLTEAKLREELREKDRLLAM.

The protein belongs to the THAP11 family. Forms homodimers. Interacts via HBM with HCFC1. Forms a complex with HCFC1 and ZNF143. As to expression, expressed in skin fibroblasts.

It localises to the nucleus. The protein resides in the cytoplasm. Transcription factor, which has both transcriptional activation and repression activities. Also modulates chromatin accessibility. In complex with HCFC1 and ZNF143, regulates the expression of several genes, including AP2S1, ESCO2, OPHN1, RBL1, UBXN8 and ZNF32. May regulate the expression of genes that encode both cytoplasmic and mitochondrial ribosomal proteins. Required for normal mitochondrial development and function. Regulates mitochondrial gene expression, including that of components of the electron transport chain. Involved in the maintainance of pluripotency in early embryonic cells, possibly through its action on mitochondrial maturation which is required to meet high energy demands of these cells. Required for early development of retina, preventing premature exit of retinal progenitor cells from the cell cycle. This effect may also be mediated by its action on mitochondria. Through the regulation of MMACHC gene expression, controls cobalamin metabolism. Required for normal brain development and neural precursor differentiation. Involved in cell growth. The sequence is that of THAP domain-containing protein 11 (THAP11) from Homo sapiens (Human).